The sequence spans 711 residues: Polyribonucleotide nucleotidyltransferase (711 aa).

The Mg(2+) site is built by Asp-486 and Asp-492. In terms of domain architecture, KH spans 553–612; that stretch reads PRIHTIKINPDKIKDVIGKGGSVIRALTEETGTTIEIEDDGTVKIAATDGEKAKHAIRRI. One can recognise an S1 motif domain in the interval 622-690; the sequence is GRVYTGKVTR…RQGRIRLSIK (69 aa). Residues 689–711 form a disordered region; the sequence is IKEATEQSQPAAAPEAPAAEQGE. Positions 694 to 711 are enriched in low complexity; it reads EQSQPAAAPEAPAAEQGE.

Belongs to the polyribonucleotide nucleotidyltransferase family. In terms of assembly, component of the RNA degradosome, which is a multiprotein complex involved in RNA processing and mRNA degradation. Requires Mg(2+) as cofactor.

It localises to the cytoplasm. It carries out the reaction RNA(n+1) + phosphate = RNA(n) + a ribonucleoside 5'-diphosphate. Involved in mRNA degradation. Catalyzes the phosphorolysis of single-stranded polyribonucleotides processively in the 3'- to 5'-direction. In Escherichia coli (strain SE11), this protein is Polyribonucleotide nucleotidyltransferase.